The following is a 93-amino-acid chain: Large ribosomal subunit protein eL37A (93 aa).

4 residues coordinate Zn(2+): Cys19, Cys22, Cys34, and Cys37. The C4-type zinc finger occupies 19-37 (CRRCGRSSYHIQKSTCAQC).

The protein belongs to the eukaryotic ribosomal protein eL37 family. Zn(2+) serves as cofactor.

In terms of biological role, binds to the 23S rRNA. The protein is Large ribosomal subunit protein eL37A of Drosophila melanogaster (Fruit fly).